The following is a 497-amino-acid chain: MRRTVRALATRVHGRVCAVPLVVGMLLATALYGGGPAAADPAAPDNLATLVAKVASADQKLQELGAAIQTQQETVNKAIVDVQAARDAAAAAQRELEAGQRGVADANAAIEAAQKRFDSFAAATYMNGPSRSYLTATDPADIVNTTATGQALIASSQQVMAKLQRARTEQVNRESAARLAKEKADQAARDAESSQDNAVAALKQAQQTFNAQQGELERLAAERAAAQAELDSVRKVSATGNAAPAAAPAAAPAPAAAPAPVPNSAPAPVPGAQPNPQAAAGNWDRAPSGPASSGQNWAVWDPTLPAIPSAFVSGDPIAIINAVLGIASTSAQVTADMGRSFLQKLGILPTPTGFTNGAIPRVYGREAVEYVIRRGMSQIGVPYSWGGGNAAGPSRGIDSGAGTVGFDCSGLMLYMFAGVGIKLDHYSGSQYNAGRKIPSSQMRRGDMIFYGPNASQHVAMYLGNGQMLEAPYTGSHVKVSPVRTSGMTPYVTRLIEY.

The signal sequence occupies residues 1 to 39 (MRRTVRALATRVHGRVCAVPLVVGMLLATALYGGGPAAA). Residues 177–192 (ARLAKEKADQAARDAE) are compositionally biased toward basic and acidic residues. Disordered stretches follow at residues 177 to 198 (ARLA…QDNA) and 253 to 297 (APAA…GQNW). Pro residues predominate over residues 255–273 (AAAPAPVPNSAPAPVPGAQ). The NlpC/P60 domain maps to 365-497 (REAVEYVIRR…TPYVTRLIEY (133 aa)). The Nucleophile role is filled by cysteine 408. Residue histidine 457 is the Proton acceptor of the active site. Residue glutamate 469 is part of the active site.

This sequence belongs to the peptidase C40 family. Monomer.

Its subcellular location is the secreted. In terms of biological role, peptidoglycan endopeptidase that cleaves the bond between D-glutamate and meso-diaminopimelate. Binds and degrades high-molecular weight peptidoglycan. Required for normal separation of daughter cells after cell division and for cell wall integrity. The chain is Peptidoglycan endopeptidase RipA (ripA) from Mycolicibacterium smegmatis (strain ATCC 700084 / mc(2)155) (Mycobacterium smegmatis).